The chain runs to 142 residues: Organic hydroperoxide resistance protein-like 2 (142 aa).

The protein belongs to the OsmC/Ohr family.

The sequence is that of Organic hydroperoxide resistance protein-like 2 from Staphylococcus epidermidis (strain ATCC 12228 / FDA PCI 1200).